A 245-amino-acid chain; its full sequence is 4-hydroxy-tetrahydrodipicolinate reductase (245 aa).

Residues 7–12 (GAKGKV), 75–77 (GTT), and 102–105 (APNF) contribute to the NAD(+) site. The active-site Proton donor/acceptor is His132. Position 133 (His133) interacts with (S)-2,3,4,5-tetrahydrodipicolinate. Lys136 acts as the Proton donor in catalysis. 142 to 143 (GT) is a (S)-2,3,4,5-tetrahydrodipicolinate binding site.

The protein belongs to the DapB family.

Its subcellular location is the cytoplasm. It carries out the reaction (S)-2,3,4,5-tetrahydrodipicolinate + NAD(+) + H2O = (2S,4S)-4-hydroxy-2,3,4,5-tetrahydrodipicolinate + NADH + H(+). The enzyme catalyses (S)-2,3,4,5-tetrahydrodipicolinate + NADP(+) + H2O = (2S,4S)-4-hydroxy-2,3,4,5-tetrahydrodipicolinate + NADPH + H(+). It functions in the pathway amino-acid biosynthesis; L-lysine biosynthesis via DAP pathway; (S)-tetrahydrodipicolinate from L-aspartate: step 4/4. Its function is as follows. Catalyzes the conversion of 4-hydroxy-tetrahydrodipicolinate (HTPA) to tetrahydrodipicolinate. The polypeptide is 4-hydroxy-tetrahydrodipicolinate reductase (Mycolicibacterium gilvum (strain PYR-GCK) (Mycobacterium gilvum (strain PYR-GCK))).